Here is a 340-residue protein sequence, read N- to C-terminus: Ketol-acid reductoisomerase (NADP(+)) (340 aa).

Residues 1–182 (MRVYYDRDCD…GGGRSGIIET (182 aa)) enclose the KARI N-terminal Rossmann domain. NADP(+) is bound by residues 24–27 (YGSQ), arginine 48, serine 51, serine 53, and 83–86 (DELQ). Histidine 108 is an active-site residue. Glycine 134 is an NADP(+) binding site. The 147-residue stretch at 183–329 (NFREECETDL…ETLRGMMPWI (147 aa)) folds into the KARI C-terminal knotted domain. Residues aspartate 191, glutamate 195, glutamate 227, and glutamate 231 each contribute to the Mg(2+) site. A substrate-binding site is contributed by serine 252.

Belongs to the ketol-acid reductoisomerase family. The cofactor is Mg(2+).

The catalysed reaction is (2R)-2,3-dihydroxy-3-methylbutanoate + NADP(+) = (2S)-2-acetolactate + NADPH + H(+). The enzyme catalyses (2R,3R)-2,3-dihydroxy-3-methylpentanoate + NADP(+) = (S)-2-ethyl-2-hydroxy-3-oxobutanoate + NADPH + H(+). It participates in amino-acid biosynthesis; L-isoleucine biosynthesis; L-isoleucine from 2-oxobutanoate: step 2/4. Its pathway is amino-acid biosynthesis; L-valine biosynthesis; L-valine from pyruvate: step 2/4. Its function is as follows. Involved in the biosynthesis of branched-chain amino acids (BCAA). Catalyzes an alkyl-migration followed by a ketol-acid reduction of (S)-2-acetolactate (S2AL) to yield (R)-2,3-dihydroxy-isovalerate. In the isomerase reaction, S2AL is rearranged via a Mg-dependent methyl migration to produce 3-hydroxy-3-methyl-2-ketobutyrate (HMKB). In the reductase reaction, this 2-ketoacid undergoes a metal-dependent reduction by NADPH to yield (R)-2,3-dihydroxy-isovalerate. The protein is Ketol-acid reductoisomerase (NADP(+)) of Roseobacter denitrificans (strain ATCC 33942 / OCh 114) (Erythrobacter sp. (strain OCh 114)).